A 2108-amino-acid chain; its full sequence is Kinesin-like protein KIF26B (2108 aa).

Disordered regions lie at residues 1–124 (MNSV…PGSD) and 263–287 (KHGS…PTHQ). Over residues 40-50 (WYRKAYEESRA) the composition is skewed to basic and acidic residues. Residues 58 to 98 (GAGSALGSSGTPSPGSGTSSPSSFTGSPGPASPGIGTSSPG) show a composition bias toward low complexity. Residues 99–120 (SLGGSPGFGTGSPGSGSGGGSS) show a composition bias toward gly residues. In terms of domain architecture, Kinesin motor spans 450 to 801 (KVKVMLRICS…IQIASRVLRM (352 aa)). ATP is bound at residue 546 to 553 (GHAKLGKS). 7 disordered regions span residues 805–825 (KTKY…GRMR), 876–917 (SDKE…GKSE), 937–1166 (DGSE…ESKK), 1406–1504 (EPEA…PVTD), 1519–1653 (GLAT…SSSK), 1685–1799 (AESL…ASKL), and 1824–1974 (RAGP…WVDG). A compositionally biased stretch (low complexity) spans 1004 to 1046 (SHSPVPAAAPAHSPSPASPRSVPGSSSQHSASPLVQSPSLQSS). Residues 1424–1461 (RESKENSAKKEMKFEDPWLKREEEVKKETAHPNEEGMM) are compositionally biased toward basic and acidic residues. The span at 1491 to 1500 (SSSSGEVSAS) shows a compositional bias: low complexity. Composition is skewed to polar residues over residues 1521–1537 (ATQS…SSSL) and 1611–1628 (RASP…SPLN). Low complexity-rich tracts occupy residues 1713–1730 (SAGT…AGQS) and 1751–1763 (STTK…TKSL). A compositionally biased stretch (polar residues) spans 1781-1795 (PWSTQSLSRNRSSGL). Residues 1824–1836 (RAGPEAEARGGAL) are compositionally biased toward low complexity. The residue at position 1855 (Thr-1855) is a Phosphothreonine. Polar residues-rich tracts occupy residues 1866-1875 (GHGSDNSSVL) and 1907-1925 (ATGS…SSSV). Residues 1930–1948 (RSLKTPKKRSNPGSQRRRL) are compositionally biased toward basic residues. A compositionally biased stretch (polar residues) spans 1954 to 1968 (LDTSSPVRKPPNSTG). A Phosphoserine modification is found at Ser-1958.

The protein belongs to the TRAFAC class myosin-kinesin ATPase superfamily. Kinesin family. KIF26 subfamily. As to quaternary structure, interacts with MYH10. Phosphorylation at Thr-1855 and Ser-1958 by CDKs, mainly CDK2 and CDK5, enhances the interaction with NEDD4, polyubiquitination, and subsequent proteasomal degradation. Phosphorylation occurs upon loss of interaction with microtubules. In terms of processing, polyubiquitinated by NEDD4, resulting in proteasomal degradation.

Its subcellular location is the cytoplasm. It localises to the cytoskeleton. Functionally, essential for embryonic kidney development. Plays an important role in the compact adhesion between mesenchymal cells adjacent to the ureteric buds, possibly by interacting with MYH10. This could lead to the establishment of the basolateral integrity of the mesenchyme and the polarized expression of ITGA8, which maintains the GDNF expression required for further ureteric bud attraction. Although it seems to lack ATPase activity it is constitutively associated with microtubules. The polypeptide is Kinesin-like protein KIF26B (KIF26B) (Homo sapiens (Human)).